An 82-amino-acid polypeptide reads, in one-letter code: Small ribosomal subunit protein uS17 (82 aa).

Belongs to the universal ribosomal protein uS17 family. As to quaternary structure, part of the 30S ribosomal subunit.

One of the primary rRNA binding proteins, it binds specifically to the 5'-end of 16S ribosomal RNA. The protein is Small ribosomal subunit protein uS17 of Shewanella frigidimarina (strain NCIMB 400).